The chain runs to 238 residues: Leucyl/phenylalanyl-tRNA--protein transferase (238 aa).

The protein belongs to the L/F-transferase family.

It is found in the cytoplasm. It catalyses the reaction N-terminal L-lysyl-[protein] + L-leucyl-tRNA(Leu) = N-terminal L-leucyl-L-lysyl-[protein] + tRNA(Leu) + H(+). The catalysed reaction is N-terminal L-arginyl-[protein] + L-leucyl-tRNA(Leu) = N-terminal L-leucyl-L-arginyl-[protein] + tRNA(Leu) + H(+). It carries out the reaction L-phenylalanyl-tRNA(Phe) + an N-terminal L-alpha-aminoacyl-[protein] = an N-terminal L-phenylalanyl-L-alpha-aminoacyl-[protein] + tRNA(Phe). Functionally, functions in the N-end rule pathway of protein degradation where it conjugates Leu, Phe and, less efficiently, Met from aminoacyl-tRNAs to the N-termini of proteins containing an N-terminal arginine or lysine. The polypeptide is Leucyl/phenylalanyl-tRNA--protein transferase (Pseudoalteromonas translucida (strain TAC 125)).